The primary structure comprises 235 residues: MVNQLEMLYEGKAKKIYATDKEDMVIVHYKDDATAFNGEKKAQIESKGVLNNEITSLIFEMLNKEGIKTHFVEKLNDRDQLCKKVEIVPLEVIVRNVAAGSMAKRLGLEEGYELKTTVFELSYKDDSLGDPLINDYHAVGIGATTFEELNKIYEITAKVNEILKEAFKKQNINLIDFKLEFGRYKGEILLADEISPDTCRFWDAKTGEKMDKDRFRRDMGNVINGYREVLNRLRN.

This sequence belongs to the SAICAR synthetase family.

The enzyme catalyses 5-amino-1-(5-phospho-D-ribosyl)imidazole-4-carboxylate + L-aspartate + ATP = (2S)-2-[5-amino-1-(5-phospho-beta-D-ribosyl)imidazole-4-carboxamido]succinate + ADP + phosphate + 2 H(+). Its pathway is purine metabolism; IMP biosynthesis via de novo pathway; 5-amino-1-(5-phospho-D-ribosyl)imidazole-4-carboxamide from 5-amino-1-(5-phospho-D-ribosyl)imidazole-4-carboxylate: step 1/2. The sequence is that of Phosphoribosylaminoimidazole-succinocarboxamide synthase from Clostridium perfringens (strain SM101 / Type A).